A 139-amino-acid chain; its full sequence is Small ribosomal subunit protein uS12 (139 aa).

Aspartate 102 bears the 3-methylthioaspartic acid mark.

Belongs to the universal ribosomal protein uS12 family. In terms of assembly, part of the 30S ribosomal subunit. Contacts proteins S8 and S17. May interact with IF1 in the 30S initiation complex.

Its function is as follows. With S4 and S5 plays an important role in translational accuracy. Interacts with and stabilizes bases of the 16S rRNA that are involved in tRNA selection in the A site and with the mRNA backbone. Located at the interface of the 30S and 50S subunits, it traverses the body of the 30S subunit contacting proteins on the other side and probably holding the rRNA structure together. The combined cluster of proteins S8, S12 and S17 appears to hold together the shoulder and platform of the 30S subunit. The protein is Small ribosomal subunit protein uS12 of Phytoplasma australiense.